Consider the following 1733-residue polypeptide: Desertorin synthase (1733 aa).

The N-terminal acylcarrier protein transacylase domain (SAT) stretch occupies residues arginine 21 to tryptophan 358. Positions aspartate 372–glutamate 799 constitute a Ketosynthase family 3 (KS3) domain. Residues histidine 406 to glycine 422 are compositionally biased toward basic and acidic residues. The disordered stretch occupies residues histidine 406 to glutamine 429. Residues cysteine 544, histidine 679, and histidine 718 each act as for beta-ketoacyl synthase activity in the active site. Residues phenylalanine 903–methionine 1211 form a malonyl-CoA:ACP transacylase (MAT) domain region. The segment at histidine 1288 to serine 1420 is N-terminal hotdog fold. A PKS/mFAS DH domain is found at histidine 1288 to histidine 1598. The product template (PT) domain stretch occupies residues glycine 1299–arginine 1594. Histidine 1320 serves as the catalytic Proton acceptor; for dehydratase activity. Residues alanine 1448–histidine 1598 form a C-terminal hotdog fold region. Aspartate 1506 functions as the Proton donor; for dehydratase activity in the catalytic mechanism. Residues histidine 1608–glutamine 1659 form a disordered region. The segment covering serine 1627–proline 1643 has biased composition (low complexity). A Carrier domain is found at glutamine 1659–leucine 1733. Residue serine 1696 is modified to O-(pantetheine 4'-phosphoryl)serine.

Requires pantetheine 4'-phosphate as cofactor.

Its pathway is secondary metabolite biosynthesis. Its function is as follows. Non-reducing polyketide synthase; part of the gene cluster that mediates the biosynthesis of the bicoumarin desertorin. The non-reducing polyketide synthase desS first catalyzes the formation of the pentaketidic 4,7-dihydroxy-5-methylcoumarin from acetyl coenzyme A and 4 malonyl coenzyme A molecules. Further O-methylation by desB leads to the formation of 7-demethylsiderin. Then, an oxidative phenol coupling catalyzed by the cytochrome P450 monooxygenase desC forms the 6,8'-dimer M-desertorin A via dimerization the monomeric precursor, 7-demethylsiderin. M-desertorin A is further converted to M-desertorin C. This chain is Desertorin synthase, found in Aspergillus desertorum (Emericella desertorum).